Here is a 192-residue protein sequence, read N- to C-terminus: MPDLILASSSPYRRELLTRLRLPFESASPDIDESHRAGESAEELVRRLSASKAEALAGRYPQHLVIGSDQVAVLDGNILGKPHTPERAIQQLRDASGKSVTFLTGLALLNSASRRIQVACVPFTVHFRHLDESRIRRYVEAERPLDCAGSFKAEGLGVSLFRSTEGEDATSLVGLPLIRLVDMLLEEGVEIP.

Asp-69 serves as the catalytic Proton acceptor.

This sequence belongs to the Maf family. YceF subfamily. A divalent metal cation serves as cofactor.

The protein localises to the cytoplasm. The catalysed reaction is N(7)-methyl-GTP + H2O = N(7)-methyl-GMP + diphosphate + H(+). Its function is as follows. Nucleoside triphosphate pyrophosphatase that hydrolyzes 7-methyl-GTP (m(7)GTP). May have a dual role in cell division arrest and in preventing the incorporation of modified nucleotides into cellular nucleic acids. This is 7-methyl-GTP pyrophosphatase from Pseudomonas aeruginosa (strain ATCC 15692 / DSM 22644 / CIP 104116 / JCM 14847 / LMG 12228 / 1C / PRS 101 / PAO1).